Here is a 561-residue protein sequence, read N- to C-terminus: Putative transport protein YbjL (561 aa).

The next 5 membrane-spanning stretches (helical) occupy residues 8–28, 32–52, 66–86, 94–114, and 158–178; these read LLNG…LCLG, LGSV…LLGQ, FMLF…SIFF, MLAL…GKLF, and NLSL…IVGA. RCK C-terminal domains are found at residues 200 to 288 and 292 to 373; these read RGLD…SLRN and VFDR…RIGF. A run of 5 helical transmembrane segments spans residues 383 to 403, 406 to 426, 447 to 467, 475 to 495, and 540 to 560; these read LLAF…TFQF, FSFG…LGFL, FGLM…ISNG, MLIA…LFGA, and AIAN…WPGL.

It belongs to the AAE transporter (TC 2.A.81) family. YbjL subfamily.

Its subcellular location is the cell membrane. This chain is Putative transport protein YbjL, found in Salmonella gallinarum (strain 287/91 / NCTC 13346).